The following is a 225-amino-acid chain: Suppressor of cytokine signaling 3 (225 aa).

The tract at residues Leu-22 to Leu-33 is kinase inhibitory region (KIR). Residues Val-34–Gly-45 form an extended SH2 subdomain (ESS) region. The region spanning Phe-46–Glu-142 is the SH2 domain. Positions Pro-131–Thr-160 are disordered. An SOCS box domain is found at Val-177 to Pro-224.

In terms of assembly, interacts with multiple activated proteins of the tyrosine kinase signaling pathway including IGF1 receptor, insulin receptor and JAK2. Binding to JAK2 is mediated through the KIR and SH2 domains to a phosphorylated tyrosine residue within the JAK2 JH1 domain. Binds specific activated tyrosine residues of the leptin, EPO, IL12, GSCF and gp130 receptors. Interaction with CSNK1E stabilizes SOCS3 protein. Component of the probable ECS(SOCS3) E3 ubiquitin-protein ligase complex which contains CUL5, RNF7/RBX2, elongin BC complex and SOCS3. Interacts with CUL5, RNF7, ELOB and ELOC. Interacts with FGFR3. Interacts with INSR. Interacts with BCL10; this interaction may interfere with BCL10-binding with PELI2. Interacts with NOD2 (via CARD domain); the interaction promotes NOD2 degradation. In terms of processing, phosphorylated on tyrosine residues after stimulation by the cytokines, IL-2, EPO or IGF1. Low expression in lung, spleen and thymus. Expressed in Th2 but not TH1 cells.

It functions in the pathway protein modification; protein ubiquitination. SOCS family proteins form part of a classical negative feedback system that regulates cytokine signal transduction. SOCS3 is involved in negative regulation of cytokines that signal through the JAK/STAT pathway. Inhibits cytokine signal transduction by binding to tyrosine kinase receptors including IL6ST/gp130, LIF, erythropoietin, insulin, IL12, GCSF and leptin receptors. Binding to JAK2 inhibits its kinase activity and regulates IL6 signaling. Suppresses fetal liver erythropoiesis. Regulates onset and maintenance of allergic responses mediated by T-helper type 2 cells. Probable substrate recognition component of a SCF-like ECS (Elongin BC-CUL2/5-SOCS-box protein) E3 ubiquitin-protein ligase complex which mediates the ubiquitination and subsequent proteasomal degradation of target proteins. The polypeptide is Suppressor of cytokine signaling 3 (Mus musculus (Mouse)).